The sequence spans 346 residues: tRNA N6-adenosine threonylcarbamoyltransferase (346 aa).

Residues His-111 and His-115 each coordinate Fe cation. Substrate is bound by residues 134–138, Asp-167, Gly-180, Asp-184, and Asn-279; that span reads LVSGG. A Fe cation-binding site is contributed by Asp-307.

This sequence belongs to the KAE1 / TsaD family. Fe(2+) serves as cofactor.

It localises to the cytoplasm. The enzyme catalyses L-threonylcarbamoyladenylate + adenosine(37) in tRNA = N(6)-L-threonylcarbamoyladenosine(37) in tRNA + AMP + H(+). Its function is as follows. Required for the formation of a threonylcarbamoyl group on adenosine at position 37 (t(6)A37) in tRNAs that read codons beginning with adenine. Is involved in the transfer of the threonylcarbamoyl moiety of threonylcarbamoyl-AMP (TC-AMP) to the N6 group of A37, together with TsaE and TsaB. TsaD likely plays a direct catalytic role in this reaction. This is tRNA N6-adenosine threonylcarbamoyltransferase from Trichormus variabilis (strain ATCC 29413 / PCC 7937) (Anabaena variabilis).